The chain runs to 300 residues: GTPase Era (300 aa).

The region spanning 6–173 (KSGFLSIIGR…VDVLKEHLPE (168 aa)) is the Era-type G domain. The G1 stretch occupies residues 14–21 (GRPNVGKS). A GTP-binding site is contributed by 14–21 (GRPNVGKS). The tract at residues 40–44 (QTTRN) is G2. Positions 61-64 (DTPG) are G3. GTP is bound by residues 61–65 (DTPGI) and 123–126 (NKID). The tract at residues 123–126 (NKID) is G4. The segment at 152-154 (ISA) is G5. A KH type-2 domain is found at 204-281 (TKEEVPHSIA…YLELWIKVKK (78 aa)).

This sequence belongs to the TRAFAC class TrmE-Era-EngA-EngB-Septin-like GTPase superfamily. Era GTPase family. In terms of assembly, monomer.

The protein localises to the cytoplasm. It localises to the cell membrane. In terms of biological role, an essential GTPase that binds both GDP and GTP, with rapid nucleotide exchange. Plays a role in 16S rRNA processing and 30S ribosomal subunit biogenesis and possibly also in cell cycle regulation and energy metabolism. The chain is GTPase Era from Oceanobacillus iheyensis (strain DSM 14371 / CIP 107618 / JCM 11309 / KCTC 3954 / HTE831).